Reading from the N-terminus, the 346-residue chain is Putative glycosyltransferase HI_0523 (346 aa).

It belongs to the glycosyltransferase 9 family.

This Haemophilus influenzae (strain ATCC 51907 / DSM 11121 / KW20 / Rd) protein is Putative glycosyltransferase HI_0523.